Reading from the N-terminus, the 129-residue chain is Small ribosomal subunit protein uS11 (129 aa).

Belongs to the universal ribosomal protein uS11 family. Part of the 30S ribosomal subunit. Interacts with proteins S7 and S18. Binds to IF-3.

In terms of biological role, located on the platform of the 30S subunit, it bridges several disparate RNA helices of the 16S rRNA. Forms part of the Shine-Dalgarno cleft in the 70S ribosome. This chain is Small ribosomal subunit protein uS11, found in Rhodopseudomonas palustris (strain BisB18).